The following is a 384-amino-acid chain: MARALVQLWAICMLRVALATVYFQEEFLDGEHWRNRWLQSTNDSRFGHFRLSSGKFYGHKEKDKGLQTTQNGRFYAISARFKPFSNKGKTLVIQYTVKHEQKMDCGGGYIKVFPADIDQKNLNGKSQYYIMFGPDICGFDIKKVHVILHFKNKYHENKKLIRCKVDGFTHLYTLILRPDLSYDVKIDGQSIESGSIEYDWNLTSLKKETSPAESKDWEQTKDNKAQDWEKHFLDASTSKQSDWNGDLDGDWPAPMLQKPPYQDGLKPEGIHKDVWLHRKMKNTDYLTQYDLSEFENIGAIGLELWQVRSGTIFDNFLITDDEEYADNFGKATWGETKGPEREMDAIQAKEEMKKAREEEEEELLSGKINRHEHYFNQFHRRNEL.

Positions 1 to 19 are cleaved as a signal peptide; that stretch reads MARALVQLWAICMLRVALA. The N-domain stretch occupies residues 20–197; that stretch reads TVYFQEEFLD…GQSIESGSIE (178 aa). Asparagine 42 is a glycosylation site (N-linked (GlcNAc...) asparagine). An intrachain disulfide couples cysteine 105 to cysteine 137. An alpha-D-glucoside contacts are provided by tyrosine 109, lysine 111, tyrosine 128, and aspartate 135. 7 repeat units span residues 191–202, 208–219, 221–230, 234–245, 249–259, 263–271, and 273–283. A 4 X approximate repeats region spans residues 191-245; sequence IESGSIEYDWNLTSLKKETSPAESKDWEQTKDNKAQDWEKHFLDASTSKQSDWNG. The segment at 198 to 294 is P-domain; that stretch reads YDWNLTSLKK…YLTQYDLSEF (97 aa). N-linked (GlcNAc...) asparagine glycosylation occurs at asparagine 201. The tract at residues 249 to 283 is 3 X approximate repeats; that stretch reads GDWPAPMLQKPPYQDGLKPEGIHKDVWLHRKMKNT. A C-domain region spans residues 295–384; the sequence is ENIGAIGLEL…FNQFHRRNEL (90 aa). Glutamate 303 provides a ligand contact to an alpha-D-glucoside. Positions 381-384 match the Prevents secretion from ER motif; it reads RNEL.

Belongs to the calreticulin family. Component of an EIF2 complex at least composed of CELF1/CUGBP1, CALR, CALR3, EIF2S1, EIF2S2, HSP90B1 and HSPA5. In terms of tissue distribution, testis specific.

The protein localises to the endoplasmic reticulum lumen. Its function is as follows. During spermatogenesis, may act as a lectin-independent chaperone for specific client proteins such as ADAM3. Required for sperm fertility. CALR3 capacity for calcium-binding may be absent or much lower than that of CALR. In Homo sapiens (Human), this protein is Calreticulin-3 (CALR3).